Here is a 196-residue protein sequence, read N- to C-terminus: Ribosome maturation factor RimP (196 aa).

This sequence belongs to the RimP family.

The protein resides in the cytoplasm. Its function is as follows. Required for maturation of 30S ribosomal subunits. The polypeptide is Ribosome maturation factor RimP (Dinoroseobacter shibae (strain DSM 16493 / NCIMB 14021 / DFL 12)).